Here is an 819-residue protein sequence, read N- to C-terminus: Pentatricopeptide repeat-containing protein At1g52620 (819 aa).

PPR repeat units lie at residues 98-132 (NGFA…NVKL), 133-163 (THEA…VVEL), 169-203 (DVIA…GDSV), 204-238 (DNYS…GCIP), 239-273 (NIVF…GFMP), 274-308 (TLET…GLRV), 309-343 (SVWF…DCKP), 344-378 (DVAT…GLIP), 379-413 (NNLS…GCKP), 414-448 (DIVT…GVSP), 449-483 (DAAI…NILP), 484-518 (DAYV…GVKV), 519-553 (DVVH…HLVP), 554-588 (DKFT…KCKP), 589-623 (NVVT…DLVP), 624-659 (NVVT…KCVP), 709-743 (HAAA…GFSP), and 744-779 (DPVS…GLEV).

It belongs to the PPR family. P subfamily.

This Arabidopsis thaliana (Mouse-ear cress) protein is Pentatricopeptide repeat-containing protein At1g52620.